Reading from the N-terminus, the 300-residue chain is Epimerase family protein SAR0825 (300 aa).

Belongs to the NAD(P)-dependent epimerase/dehydratase family. SDR39U1 subfamily.

The polypeptide is Epimerase family protein SAR0825 (Staphylococcus aureus (strain MRSA252)).